Consider the following 215-residue polypeptide: Small ribosomal subunit protein uS3 (215 aa).

The KH type-2 domain occupies 38 to 106 (LRAFLKKKLF…EVLIDIQEIR (69 aa)).

Belongs to the universal ribosomal protein uS3 family. Part of the 30S ribosomal subunit. Forms a tight complex with proteins S10 and S14.

Binds the lower part of the 30S subunit head. Binds mRNA in the 70S ribosome, positioning it for translation. The protein is Small ribosomal subunit protein uS3 of Desulforapulum autotrophicum (strain ATCC 43914 / DSM 3382 / VKM B-1955 / HRM2) (Desulfobacterium autotrophicum).